Here is a 152-residue protein sequence, read N- to C-terminus: Transcriptional regulator MraZ (152 aa).

2 SpoVT-AbrB domains span residues 5 to 52 (ASAI…PLKE) and 81 to 124 (ATEC…SDAE).

The protein belongs to the MraZ family. Forms oligomers.

It is found in the cytoplasm. Its subcellular location is the nucleoid. This is Transcriptional regulator MraZ from Pasteurella multocida (strain Pm70).